The following is a 244-amino-acid chain: ATP synthase subunit a (244 aa).

6 consecutive transmembrane segments (helical) span residues 17 to 37 (LTNI…AILT), 75 to 95 (FLAL…LGLP), 112 to 132 (DPAI…YYGV), 164 to 184 (LTLG…LGLL), 196 to 216 (FFLG…WQAF), and 217 to 237 (SLFI…VYMS).

This sequence belongs to the ATPase A chain family. In terms of assembly, F-type ATPases have 2 components, CF(1) - the catalytic core - and CF(0) - the membrane proton channel. CF(1) has five subunits: alpha(3), beta(3), gamma(1), delta(1), epsilon(1). CF(0) has three main subunits: a(1), b(2) and c(9-12). The alpha and beta chains form an alternating ring which encloses part of the gamma chain. CF(1) is attached to CF(0) by a central stalk formed by the gamma and epsilon chains, while a peripheral stalk is formed by the delta and b chains.

It localises to the cell membrane. Key component of the proton channel; it plays a direct role in the translocation of protons across the membrane. This chain is ATP synthase subunit a, found in Bacillus velezensis (strain DSM 23117 / BGSC 10A6 / LMG 26770 / FZB42) (Bacillus amyloliquefaciens subsp. plantarum).